A 478-amino-acid chain; its full sequence is ATP synthase subunit beta (478 aa).

Residue 164–171 (GGAGVGKT) participates in ATP binding.

This sequence belongs to the ATPase alpha/beta chains family. As to quaternary structure, F-type ATPases have 2 components, CF(1) - the catalytic core - and CF(0) - the membrane proton channel. CF(1) has five subunits: alpha(3), beta(3), gamma(1), delta(1), epsilon(1). CF(0) has three main subunits: a(1), b(2) and c(9-12). The alpha and beta chains form an alternating ring which encloses part of the gamma chain. CF(1) is attached to CF(0) by a central stalk formed by the gamma and epsilon chains, while a peripheral stalk is formed by the delta and b chains.

It localises to the cell membrane. The enzyme catalyses ATP + H2O + 4 H(+)(in) = ADP + phosphate + 5 H(+)(out). Its function is as follows. Produces ATP from ADP in the presence of a proton gradient across the membrane. The catalytic sites are hosted primarily by the beta subunits. The sequence is that of ATP synthase subunit beta from Streptomyces coelicolor (strain ATCC BAA-471 / A3(2) / M145).